Here is a 472-residue protein sequence, read N- to C-terminus: Probable sterol O-acyltransferase 2 (472 aa).

Ser-12 carries the phosphoserine modification. 3 helical membrane passes run 61–81 (FTGF…MSFL), 111–131 (LAMS…ALGY), and 135–155 (YGLG…HCVL). An N-linked (GlcNAc...) asparagine glycan is attached at Asn-161. The chain crosses the membrane as a helical span at residues 170–190 (FILHSMVILMKLHSYNVVNGW). Asn-233 carries an N-linked (GlcNAc...) asparagine glycan. Helical transmembrane passes span 262–282 (IHYL…LVII) and 317–337 (TVAF…WVIF). N-linked (GlcNAc...) asparagine glycosylation is present at Asn-342. Positions 355–361 (FYDDWWN) match the FYXDWWN motif motif. His-409 is an active-site residue. The helical transmembrane segment at 452–472 (IAFWFSIIIGIALIAALYILF) threads the bilayer.

Belongs to the membrane-bound acyltransferase family. Sterol o-acyltransferase subfamily.

It localises to the endoplasmic reticulum membrane. Functionally, sterol O-acyltransferase that catalyzes the formation of stery esters. In Schizosaccharomyces pombe (strain 972 / ATCC 24843) (Fission yeast), this protein is Probable sterol O-acyltransferase 2 (are2).